The chain runs to 123 residues: Holo-[acyl-carrier-protein] synthase (123 aa).

Residues Asp8 and Glu60 each coordinate Mg(2+).

This sequence belongs to the P-Pant transferase superfamily. AcpS family. Mg(2+) serves as cofactor.

The protein localises to the cytoplasm. The catalysed reaction is apo-[ACP] + CoA = holo-[ACP] + adenosine 3',5'-bisphosphate + H(+). Transfers the 4'-phosphopantetheine moiety from coenzyme A to a Ser of acyl-carrier-protein. This chain is Holo-[acyl-carrier-protein] synthase, found in Ehrlichia ruminantium (strain Gardel).